The primary structure comprises 425 residues: Trigger factor (425 aa).

The 86-residue stretch at 163-248 folds into the PPIase FKBP-type domain; it reads GDTAVIDFEG…IHEIKTKELP (86 aa).

The protein belongs to the FKBP-type PPIase family. Tig subfamily.

It is found in the cytoplasm. The catalysed reaction is [protein]-peptidylproline (omega=180) = [protein]-peptidylproline (omega=0). Its function is as follows. Involved in protein export. Acts as a chaperone by maintaining the newly synthesized protein in an open conformation. Functions as a peptidyl-prolyl cis-trans isomerase. The protein is Trigger factor of Bacillus cereus (strain G9842).